We begin with the raw amino-acid sequence, 301 residues long: MNPLKKKPRTHSLQNAPEKPDWLKVKLAFPDPKNNPVAIVRNSLEEKKLNTVCESASCPNLNHCWSRKTATYMLGGDICTRRCSYCDVASGKPFPLDPEEPKRIAESSIALGLRHVVITSVNRDDLEDGGAAHFAKTVKEIRKGLPDCKIELLIPDLKVKQEALEIIFECNPDIFNHNLETVKRLFPEVAPQKRYERSLDVLKIASARGFLTKSGLILGMGETLEEVKECMQDLASVGVSLLTLGQYLQPTSTHLPVKEYVVPQVFKDLRIYGKSIGFKGVFSGPLVRSSYHADEQISWNP.

7 residues coordinate [4Fe-4S] cluster: C53, C58, C64, C79, C83, C86, and S290. The region spanning 65–279 (WSRKTATYML…RIYGKSIGFK (215 aa)) is the Radical SAM core domain.

It belongs to the radical SAM superfamily. Lipoyl synthase family. [4Fe-4S] cluster is required as a cofactor.

The protein localises to the cytoplasm. The catalysed reaction is [[Fe-S] cluster scaffold protein carrying a second [4Fe-4S](2+) cluster] + N(6)-octanoyl-L-lysyl-[protein] + 2 oxidized [2Fe-2S]-[ferredoxin] + 2 S-adenosyl-L-methionine + 4 H(+) = [[Fe-S] cluster scaffold protein] + N(6)-[(R)-dihydrolipoyl]-L-lysyl-[protein] + 4 Fe(3+) + 2 hydrogen sulfide + 2 5'-deoxyadenosine + 2 L-methionine + 2 reduced [2Fe-2S]-[ferredoxin]. The protein operates within protein modification; protein lipoylation via endogenous pathway; protein N(6)-(lipoyl)lysine from octanoyl-[acyl-carrier-protein]: step 2/2. Functionally, catalyzes the radical-mediated insertion of two sulfur atoms into the C-6 and C-8 positions of the octanoyl moiety bound to the lipoyl domains of lipoate-dependent enzymes, thereby converting the octanoylated domains into lipoylated derivatives. This is Lipoyl synthase from Leptospira interrogans serogroup Icterohaemorrhagiae serovar copenhageni (strain Fiocruz L1-130).